Here is a 639-residue protein sequence, read N- to C-terminus: MSHNFTESYDIIVIGAGHAGVEASLAASRMGCKVLLATINIEMLAFMPCNPSIGGSAKGIVVREVDALGGEMAKNIDKSYIQMKMLNTGKGPAVRALRAQADKEVYSKEMRKTVENQENLTLRQTMINEILVEDGKVIGVKTATHQEYAAKAVIVTTGTALRGEIIIGDLKYSSGPNHSLAAIPLADNLRDLGFEIGRFKTGTPPRVKASSINYDVTEIQPGDEKANHFSYTSRDEDYVKDQVPCWLTYTNAESHEIIQNNLHRAPMFSGIVKGVGPRYCPSIEDKIVRFADKERHQLFLEPEGRDTEEVYVQGLSTSLPEDVQKDLVHSIKGLENAEMMRTGYAIEYDMIMPHQLRATLETKKISGLFTAGQTNGTSGYEEAAGQGIIAGINAALKIQGRPELILKRSDGYIGVMIDDLVTKGTVEPYRLLTSRAEYRLILRHDNADMRLTEMGREIGLVDDERWARFEIKKNQFDNEMKRLESIKLKPVKETNAKVEELGFKPLTDAVTAKEFMRRPEVSYQDVVQFIGPAAEELDEKIIELIETEIKYEGYISKALDQVEKMKRMEEKRIPANIDWDDIDSIATEARQKFKKINPETIGQASRISGVNPADISILMVYLEGKARSISKNKEKQNHV.

15 to 20 (GAGHAG) serves as a coordination point for FAD. NAD(+) is bound at residue 276–290 (GPRYCPSIEDKIVRF).

This sequence belongs to the MnmG family. As to quaternary structure, homodimer. Heterotetramer of two MnmE and two MnmG subunits. FAD is required as a cofactor.

It is found in the cytoplasm. Its function is as follows. NAD-binding protein involved in the addition of a carboxymethylaminomethyl (cmnm) group at the wobble position (U34) of certain tRNAs, forming tRNA-cmnm(5)s(2)U34. The protein is tRNA uridine 5-carboxymethylaminomethyl modification enzyme MnmG of Streptococcus gordonii (strain Challis / ATCC 35105 / BCRC 15272 / CH1 / DL1 / V288).